A 193-amino-acid chain; its full sequence is ATP-dependent Clp protease proteolytic subunit (193 aa).

S98 acts as the Nucleophile in catalysis. The active site involves H123.

Belongs to the peptidase S14 family. In terms of assembly, fourteen ClpP subunits assemble into 2 heptameric rings which stack back to back to give a disk-like structure with a central cavity, resembling the structure of eukaryotic proteasomes.

The protein resides in the cytoplasm. It catalyses the reaction Hydrolysis of proteins to small peptides in the presence of ATP and magnesium. alpha-casein is the usual test substrate. In the absence of ATP, only oligopeptides shorter than five residues are hydrolyzed (such as succinyl-Leu-Tyr-|-NHMec, and Leu-Tyr-Leu-|-Tyr-Trp, in which cleavage of the -Tyr-|-Leu- and -Tyr-|-Trp bonds also occurs).. Cleaves peptides in various proteins in a process that requires ATP hydrolysis. Has a chymotrypsin-like activity. Plays a major role in the degradation of misfolded proteins. The sequence is that of ATP-dependent Clp protease proteolytic subunit from Haemophilus influenzae (strain PittEE).